Consider the following 342-residue polypeptide: Protein pelota homolog (342 aa).

The protein belongs to the eukaryotic release factor 1 family. Pelota subfamily. In terms of assembly, monomer. A divalent metal cation is required as a cofactor.

Its subcellular location is the cytoplasm. Its function is as follows. May function in recognizing stalled ribosomes, interact with stem-loop structures in stalled mRNA molecules, and effect endonucleolytic cleavage of the mRNA. May play a role in the release non-functional ribosomes and degradation of damaged mRNAs. Has endoribonuclease activity. This chain is Protein pelota homolog, found in Sulfolobus acidocaldarius (strain ATCC 33909 / DSM 639 / JCM 8929 / NBRC 15157 / NCIMB 11770).